A 497-amino-acid chain; its full sequence is 3-octaprenyl-4-hydroxybenzoate carboxy-lyase (497 aa).

Asparagine 175 contacts Mn(2+). Prenylated FMN is bound by residues 178 to 180, 192 to 194, and 197 to 198; these read IYR, RWL, and RG. Mn(2+) is bound at residue glutamate 241. The active-site Proton donor is aspartate 290.

The protein belongs to the UbiD family. Homohexamer. Prenylated FMN is required as a cofactor. It depends on Mn(2+) as a cofactor.

Its subcellular location is the cell membrane. It catalyses the reaction a 4-hydroxy-3-(all-trans-polyprenyl)benzoate + H(+) = a 2-(all-trans-polyprenyl)phenol + CO2. The protein operates within cofactor biosynthesis; ubiquinone biosynthesis. Catalyzes the decarboxylation of 3-octaprenyl-4-hydroxy benzoate to 2-octaprenylphenol, an intermediate step in ubiquinone biosynthesis. This Shigella dysenteriae serotype 1 (strain Sd197) protein is 3-octaprenyl-4-hydroxybenzoate carboxy-lyase.